The chain runs to 195 residues: Probable DNA-directed RNA polymerase subunit delta (195 aa).

The 70-residue stretch at 14–83 (LSMIEVARAI…GDNKWGLRSW (70 aa)) folds into the HTH HARE-type domain. 2 stretches are compositionally biased toward acidic residues: residues 119-138 (GDED…DSYE) and 145-195 (YDDE…GEEE). A disordered region spans residues 119–195 (GDEDAIDYSD…SDDDAEGEEE (77 aa)).

It belongs to the RpoE family. As to quaternary structure, RNAP is composed of a core of 2 alpha, a beta and a beta' subunits. The core is associated with a delta subunit and one of several sigma factors.

In terms of biological role, participates in both the initiation and recycling phases of transcription. In the presence of the delta subunit, RNAP displays an increased specificity of transcription, a decreased affinity for nucleic acids, and an increased efficiency of RNA synthesis because of enhanced recycling. This is Probable DNA-directed RNA polymerase subunit delta from Streptococcus gordonii (strain Challis / ATCC 35105 / BCRC 15272 / CH1 / DL1 / V288).